A 2355-amino-acid chain; its full sequence is Acetyl-CoA carboxylase 2 (2355 aa).

One can recognise a Biotin carboxylation domain in the interval 138-645; sequence PIHSILVATN…HTGWLDSRIA (508 aa). The region spanning 291-485 is the ATP-grasp domain; it reads GRSLVTVPEE…AAQVAVGMGI (195 aa). Residue 317-374 participates in ATP binding; it reads CQVVGYPAMIKASWGGGGKGIRKVHNDDEVRALFKQVQGEVPGSPIFIMKVASQSRHL. Mg(2+) is bound by residues glutamate 440, glutamate 454, and asparagine 456. The Mn(2+) site is built by glutamate 440, glutamate 454, and asparagine 456. Residue arginine 458 is part of the active site. Residues 772 to 846 form the Biotinyl-binding domain; that stretch reads LQNDHDPSKL…QAGELIAKLD (75 aa). Lysine 813 is modified (N6-biotinyllysine). Threonine 1133 is subject to Phosphothreonine. Position 1293 is a phosphoserine (serine 1293). The CoA carboxyltransferase N-terminal domain occupies 1593–1932; it reads QYKPLNNLDR…YVGGPLPVLA (340 aa). The tract at residues 1593–2251 is carboxyltransferase; sequence QYKPLNNLDR…ESSLVRNIRK (659 aa). CoA-binding residues include arginine 1841, lysine 2142, and arginine 2144. Positions 1936–2251 constitute a CoA carboxyltransferase C-terminal domain; that stretch reads PPERTVEYIP…ESSLVRNIRK (316 aa).

As to quaternary structure, homodimer. Biotin serves as cofactor. It depends on Mg(2+) as a cofactor. Mn(2+) is required as a cofactor. As to expression, widely expressed at low levels.

The protein resides in the cytoplasm. It localises to the cytosol. It carries out the reaction hydrogencarbonate + acetyl-CoA + ATP = malonyl-CoA + ADP + phosphate + H(+). The catalysed reaction is N(6)-biotinyl-L-lysyl-[protein] + hydrogencarbonate + ATP = N(6)-carboxybiotinyl-L-lysyl-[protein] + ADP + phosphate + H(+). It participates in lipid metabolism; malonyl-CoA biosynthesis; malonyl-CoA from acetyl-CoA: step 1/1. Its function is as follows. Multifunctional enzyme that catalyzes the carboxylation of acetyl-CoA, forming malonyl-CoA, which is used in the plastid for fatty acid synthesis and in the cytosol in various biosynthetic pathways including fatty acid elongation. This chain is Acetyl-CoA carboxylase 2 (ACC2), found in Arabidopsis thaliana (Mouse-ear cress).